We begin with the raw amino-acid sequence, 224 residues long: Haloacetate dehalogenase H-2 (224 aa).

The Nucleophile role is filled by Asp-10.

Belongs to the HAD-like hydrolase superfamily. S-2-haloalkanoic acid dehalogenase family.

It carries out the reaction a haloacetate + H2O = a halide anion + glycolate + H(+). This Moraxella sp. (strain B) protein is Haloacetate dehalogenase H-2 (dehH2).